A 612-amino-acid chain; its full sequence is MFNAPRPMASSYSYTDPLSNSAAAGAAFGELDPWSSAPSPAGSVTPARATASASEGRNIAANGNKEEGLNGLINDPPALYVSLLDQLDTSGTGEVSLAAVHRLLGTSKLPAVVVEKIIHLTSRDKSTLTRPEFFCALALVSLAQSSPDPNDISIEKLSFSLSNLPLPKLKPSDPPSVSSGVAASTAAATGFNAWDGTINKGTTYSANNSTFRSTDPMVDNAEDRWWKDQERIVVTLIPEKEGWFLQKYRIESDKRGEGPVARRYSDFVWLMDVLEKRYPFRILPPLPPKRINPSSAFLEARRLALIRLLSFLTAHPVLRTDACLNIFLTSSSFESWRKRTPVSTDEESLSKKLTTAQEMSIPSDLELKLDNLRERLPAMLGHYTRLVVMAERSLVRLQVQAAEAARMAMSTQSIGELVPRCCWRSVQGDDGESGRGVARECGLCEGVGRGWGDVGDGWVSVGEELEKGVQLLQKHIESLKSQRDLYSSFHALFYRHNKLSLDNVDVLRKRVDSRFSKIESLKSAKKPGWEGEVDKLASQSDRDTAEIQRLLARRVFVRACMWHELSVVFHSMQAAQGTMGWKDFVKDQKERTKRLNGVWQGLEETLESMPLE.

Residues 35 to 68 (SSAPSPAGSVTPARATASASEGRNIAANGNKEEG) form a disordered region. Residues 226 to 334 (WKDQERIVVT…NIFLTSSSFE (109 aa)) form the PX domain. Residues Arg263, Ser265, Lys289, and Arg301 each contribute to the a 1,2-diacyl-sn-glycero-3-phospho-(1D-myo-inositol-3-phosphate) site.

It belongs to the sorting nexin family.

Its subcellular location is the cytoplasm. The protein resides in the membrane. Functionally, required for vacuolar protein sorting. The polypeptide is Sorting nexin MVP1 (MVP1) (Cryptococcus neoformans var. neoformans serotype D (strain B-3501A) (Filobasidiella neoformans)).